The chain runs to 272 residues: ATP phosphoribosyltransferase regulatory subunit (272 aa).

The protein belongs to the class-II aminoacyl-tRNA synthetase family. HisZ subfamily. As to quaternary structure, heteromultimer composed of HisG and HisZ subunits.

The protein localises to the cytoplasm. It functions in the pathway amino-acid biosynthesis; L-histidine biosynthesis; L-histidine from 5-phospho-alpha-D-ribose 1-diphosphate: step 1/9. Required for the first step of histidine biosynthesis. May allow the feedback regulation of ATP phosphoribosyltransferase activity by histidine. This Staphylococcus aureus (strain Mu3 / ATCC 700698) protein is ATP phosphoribosyltransferase regulatory subunit.